The sequence spans 522 residues: 2-isopropylmalate synthase (522 aa).

The Pyruvate carboxyltransferase domain maps to 5-267 (VIIFDTTLRD…HTRINHQEIY (263 aa)). Mn(2+)-binding residues include aspartate 14, histidine 202, histidine 204, and asparagine 238. A regulatory domain region spans residues 392 to 522 (RLDTFNVQSG…SQVKDQKETV (131 aa)).

This sequence belongs to the alpha-IPM synthase/homocitrate synthase family. LeuA type 1 subfamily. As to quaternary structure, homodimer. Mn(2+) is required as a cofactor.

It is found in the cytoplasm. It carries out the reaction 3-methyl-2-oxobutanoate + acetyl-CoA + H2O = (2S)-2-isopropylmalate + CoA + H(+). It functions in the pathway amino-acid biosynthesis; L-leucine biosynthesis; L-leucine from 3-methyl-2-oxobutanoate: step 1/4. Catalyzes the condensation of the acetyl group of acetyl-CoA with 3-methyl-2-oxobutanoate (2-ketoisovalerate) to form 3-carboxy-3-hydroxy-4-methylpentanoate (2-isopropylmalate). This Erwinia tasmaniensis (strain DSM 17950 / CFBP 7177 / CIP 109463 / NCPPB 4357 / Et1/99) protein is 2-isopropylmalate synthase.